A 403-amino-acid polypeptide reads, in one-letter code: Poly(rC)-binding protein 4 (403 aa).

KH domains follow at residues 17-67, 101-154, and 241-293; these read TLTL…TITG, PVTL…TVSG, and TSSQ…TITG.

The protein resides in the cytoplasm. Functionally, single-stranded nucleic acid binding protein that binds preferentially to oligo dC. The polypeptide is Poly(rC)-binding protein 4 (PCBP4) (Homo sapiens (Human)).